A 138-amino-acid chain; its full sequence is MGRILAIDYGRKRTGLAVTDPLKIIPGGLTTVPTHTLLDFLRDYVSREPVERFVLGLPRRMNYEESESMTYIRPFAVKLAQAFPSIPITYVDERFTSRMAQRTILEAGIGKMKRRDKALVDEVSAVIILQSYLDNPDR.

The protein belongs to the YqgF nuclease family.

The protein localises to the cytoplasm. Could be a nuclease involved in processing of the 5'-end of pre-16S rRNA. This Porphyromonas gingivalis (strain ATCC BAA-308 / W83) protein is Putative pre-16S rRNA nuclease.